The primary structure comprises 576 residues: MALLQTSLIWAVYAIVVAVLVMVASVFIYTYQTPRDRSSVVTFTCIVAITSLLATVLLLPVDVALTSSTTSSKLGQRKPWATQDEVDKIVSLLTAVYYLLYSLDAFLCLLAIPFVYFWYEEYDEVAVESGEQSAAKRLWTAFKYTISFIAIVVVLFIVGFLVPVANIKDSKVSDYLRKLLAENRGERVLTFTLGLLITMGLFLYILYTSTGLAVLPMRMIRAAPSVSDMTWKASTSAQLESNRERQRQLEGRCRGDPGLLSSKERRELDTLVRDERTLIRRQRLAEEADGEGQSRFMRAWLKTTAFFRPLKLLGGIAILLITLMIWISMLLTAIDKAKNSICKQRCGYILSGIGVFNPINWIFVQSAKVFPIDYAVLTVVVLLLFGSSVVGISTIGIRFLWIRIFHVRKGHTSPQALLLTTAMLMLTILALDYSIPMLVAPQYATFGPQTFCDRPQGQQSDCLTNKHLIKPCSELTDNTAAKRVCTPSVTSMFLNRVTISYPFFGTVFFWSQFIFLVIYLLVLVTSFIRHPKLDERLLDQEAEEAEEERLLTSSARGVGDTYQSVGGRNNFSTRAG.

Helical transmembrane passes span 8–28 (LIWA…SVFI), 40–60 (VVTF…LLLP), 98–118 (YLLY…VYFW), 145–165 (TISF…VPVA), 188–208 (VLTF…ILYT), 312–332 (LLGG…MLLT), 347–367 (GYIL…VQSA), 377–397 (LTVV…TIGI), 419–439 (LTTA…PMLV), and 503–523 (FFGT…LLVL). The interval 549 to 576 (RLLTSSARGVGDTYQSVGGRNNFSTRAG) is disordered. Polar residues predominate over residues 561–576 (TYQSVGGRNNFSTRAG). N-linked (GlcNAc...) asparagine glycosylation is present at N570.

The protein belongs to the LIMR family. LMBRD1 subfamily.

It localises to the lysosome membrane. In terms of biological role, probable lysosomal cobalamin transporter. Required to export cobalamin from lysosomes allowing its conversion to cofactors. The chain is Probable lysosomal cobalamin transporter from Aspergillus niger (strain ATCC MYA-4892 / CBS 513.88 / FGSC A1513).